We begin with the raw amino-acid sequence, 223 residues long: N-(5'-phosphoribosyl)anthranilate isomerase (223 aa).

It belongs to the TrpF family.

It carries out the reaction N-(5-phospho-beta-D-ribosyl)anthranilate = 1-(2-carboxyphenylamino)-1-deoxy-D-ribulose 5-phosphate. Its pathway is amino-acid biosynthesis; L-tryptophan biosynthesis; L-tryptophan from chorismate: step 3/5. This Moorella thermoacetica (strain ATCC 39073 / JCM 9320) protein is N-(5'-phosphoribosyl)anthranilate isomerase.